Here is a 246-residue protein sequence, read N- to C-terminus: Probable transcriptional regulatory protein Teth39_1009 (246 aa).

Residues 1–21 form a disordered region; that stretch reads MSGHSKWANIKHKKEKMDAKK.

It belongs to the TACO1 family.

It is found in the cytoplasm. In Thermoanaerobacter pseudethanolicus (strain ATCC 33223 / 39E) (Clostridium thermohydrosulfuricum), this protein is Probable transcriptional regulatory protein Teth39_1009.